The sequence spans 474 residues: Glutathione synthetase (474 aa).

Ala-2 is modified (N-acetylalanine). A substrate-binding site is contributed by Arg-125. Position 144 (Glu-144) interacts with ATP. Residues Glu-144 and Asn-146 each contribute to the Mg(2+) site. Residues 148–151, 214–216, Gln-220, and 267–270 contribute to the substrate site; these read ISAS, ERN, and RDGY. Residues Lys-305, 364–373, Tyr-375, and 398–401 each bind ATP; these read KPQREGGGNN and MEKI. Glu-368 contacts Mg(2+). A Phosphoserine modification is found at Ser-415. Position 425 (Glu-425) interacts with ATP. Arg-450 contributes to the substrate binding site. The ATP site is built by Lys-452 and Asp-458. Residue 461-462 coordinates substrate; sequence VA.

This sequence belongs to the eukaryotic GSH synthase family. Homodimer. It depends on Mg(2+) as a cofactor.

It carries out the reaction gamma-L-glutamyl-L-cysteine + glycine + ATP = glutathione + ADP + phosphate + H(+). It catalyses the reaction gamma-L-glutamyl-(2S)-2-aminobutanoate + glycine + ATP = ophthalmate + ADP + phosphate + H(+). Its pathway is sulfur metabolism; glutathione biosynthesis; glutathione from L-cysteine and L-glutamate: step 2/2. Functionally, catalyzes the production of glutathione from gamma-glutamylcysteine and glycine in an ATP-dependent manner. Glutathione (gamma-glutamylcysteinylglycine, GSH) is the most abundant intracellular thiol in living aerobic cells and is required for numerous processes including the protection of cells against oxidative damage, amino acid transport, the detoxification of foreign compounds, the maintenance of protein sulfhydryl groups in a reduced state and acts as a cofactor for a number of enzymes. Participates in ophthalmate biosynthesis in hepatocytes. The sequence is that of Glutathione synthetase from Rattus norvegicus (Rat).